The following is a 271-amino-acid chain: Diaminopimelate epimerase (271 aa).

Substrate is bound by residues N13, Q46, and N66. C75 acts as the Proton donor in catalysis. Residues 76–77, N155, N188, and 206–207 contribute to the substrate site; these read GN and ER. The Proton acceptor role is filled by C215. 216–217 contacts substrate; sequence GS.

This sequence belongs to the diaminopimelate epimerase family. As to quaternary structure, homodimer.

It localises to the cytoplasm. The catalysed reaction is (2S,6S)-2,6-diaminopimelate = meso-2,6-diaminopimelate. It participates in amino-acid biosynthesis; L-lysine biosynthesis via DAP pathway; DL-2,6-diaminopimelate from LL-2,6-diaminopimelate: step 1/1. In terms of biological role, catalyzes the stereoinversion of LL-2,6-diaminopimelate (L,L-DAP) to meso-diaminopimelate (meso-DAP), a precursor of L-lysine and an essential component of the bacterial peptidoglycan. This is Diaminopimelate epimerase from Vesicomyosocius okutanii subsp. Calyptogena okutanii (strain HA).